Reading from the N-terminus, the 244-residue chain is Methylthioribulose-1-phosphate dehydratase (244 aa).

Cys-104 contributes to the substrate binding site. His-122 and His-124 together coordinate Zn(2+). Glu-148 serves as the catalytic Proton donor/acceptor. Zn(2+) is bound at residue His-204.

Belongs to the aldolase class II family. MtnB subfamily. Zn(2+) is required as a cofactor.

Its subcellular location is the cytoplasm. It catalyses the reaction 5-(methylsulfanyl)-D-ribulose 1-phosphate = 5-methylsulfanyl-2,3-dioxopentyl phosphate + H2O. It participates in amino-acid biosynthesis; L-methionine biosynthesis via salvage pathway; L-methionine from S-methyl-5-thio-alpha-D-ribose 1-phosphate: step 2/6. Catalyzes the dehydration of methylthioribulose-1-phosphate (MTRu-1-P) into 2,3-diketo-5-methylthiopentyl-1-phosphate (DK-MTP-1-P). The chain is Methylthioribulose-1-phosphate dehydratase from Cryptococcus neoformans var. neoformans serotype D (strain B-3501A) (Filobasidiella neoformans).